We begin with the raw amino-acid sequence, 248 residues long: Ureidoacrylate amidohydrolase RutB (248 aa).

The active-site Proton acceptor is the aspartate 43. Lysine 152 is a catalytic residue. Residue cysteine 185 is the Nucleophile of the active site.

The protein belongs to the isochorismatase family. RutB subfamily.

The enzyme catalyses (Z)-3-ureidoacrylate + H2O + H(+) = (Z)-3-aminoacrylate + NH4(+) + CO2. It carries out the reaction (Z)-3-ureidoacrylate + H2O = (Z)-3-aminoacrylate + carbamate + H(+). It catalyses the reaction (Z)-2-methylureidoacrylate + H2O + H(+) = (Z)-2-methylaminoacrylate + NH4(+) + CO2. Its function is as follows. Hydrolyzes ureidoacrylate to form aminoacrylate and carbamate. The carbamate hydrolyzes spontaneously, thereby releasing one of the nitrogen atoms of the pyrimidine ring as ammonia and one of its carbon atoms as CO2. This is Ureidoacrylate amidohydrolase RutB from Serratia proteamaculans (strain 568).